We begin with the raw amino-acid sequence, 248 residues long: MYKLVLIRHGESQWNLENRFTGWHDVDLTDTGREQARNGGRMLKEAGFEFDLAYSSVLTRAIRTLNLVLEEMGQMWLPVERHWRLNERHYGALTGLDKAETAAKHGDEQVKIWRRSFDVPPPDVDESSEHFPAHDPRYRGIDKNVLPKAESLKLTIDRVLPYWHDVIRPSILGGKRVIIAAHGNSLRALVKYLDDMSDAEILDLNIPTGVPLVYDLDADLRPIKREYLGDPEAIKAMMDAVAKQGQAK.

Substrate contacts are provided by residues 8–15 (RHGESQWN), 21–22 (TG), R60, 87–90 (ERHY), K98, 114–115 (RR), and 183–184 (GN). The active-site Tele-phosphohistidine intermediate is H9. E87 acts as the Proton donor/acceptor in catalysis.

Belongs to the phosphoglycerate mutase family. BPG-dependent PGAM subfamily. As to quaternary structure, homodimer.

The enzyme catalyses (2R)-2-phosphoglycerate = (2R)-3-phosphoglycerate. It participates in carbohydrate degradation; glycolysis; pyruvate from D-glyceraldehyde 3-phosphate: step 3/5. Its function is as follows. Catalyzes the interconversion of 2-phosphoglycerate and 3-phosphoglycerate. The chain is 2,3-bisphosphoglycerate-dependent phosphoglycerate mutase from Teredinibacter turnerae (strain ATCC 39867 / T7901).